The chain runs to 413 residues: MIYGEVTLTIIDNDKKVKIRKKNTIVNLSALLPLITSTTSTAGSIITPYIQTNAGNIPVTYSVQPYESGYVFIFTGSFSQPSNIISAFLYPSSLSTFQQPIASIVYSREITGVTSIEWAIYVDDATGLLYNALLPNIITSTNFLSALYADDGNTNALLTLGAYQHYVYAYFSDATISKAINYINAHYFTFIDYTTSPSAITIGNNFALQLVPASTGQHTVFYYLWNSQNFTMQFSFSSGSSPLADGFVVCMYATTPPIALNTSSVTGMTNGTLAYGEGNQICVEFDPYSSQPISVTQWNGSGYVSTLLSSSGAGTGTSMTANDIFVLEITVSGTTMTVTVTDVTANKTIASQSVTLPFTPPSYGYAIITARNENDYANWSLVNIVDWYPYSIQIPTSYVSPQLLPITAIFNTD.

Residues 25 to 47 traverse the membrane as a helical segment; it reads IVNLSALLPLITSTTSTAGSIIT.

It localises to the host membrane. This is an uncharacterized protein from Acidianus sp. F28 (AFV-2).